We begin with the raw amino-acid sequence, 633 residues long: Electron transfer flavoprotein-ubiquinone oxidoreductase, mitochondrial (633 aa).

A mitochondrion-targeting transit peptide spans 1-90; the sequence is MHRFLVKLSS…NGITSSRCIS (90 aa). 102 to 116 provides a ligand contact to FAD; it reads VLIVGAGPAGLSAAI. Residues 140–161 lie within the membrane without spanning it; sequence VGGHIISGNVFEPLALDELLPH. G334 and G335 together coordinate a ubiquinone. Residues 401–421 lie within the membrane without spanning it; the sequence is IPYPVFPGGAIIGCSAGFLNV. Positions 578, 602, 605, and 608 each coordinate [4Fe-4S] cluster. A 4Fe-4S ferredoxin-type domain is found at 593 to 622; the sequence is PKLQINAQNCLHCKACDIKDPKQNIEWTVP.

This sequence belongs to the ETF-QO/FixC family. Requires [4Fe-4S] cluster as cofactor. It depends on FAD as a cofactor.

It is found in the mitochondrion inner membrane. The enzyme catalyses a ubiquinone + reduced [electron-transfer flavoprotein] = a ubiquinol + oxidized [electron-transfer flavoprotein] + H(+). With respect to regulation, up-regulated by KIN10, by S1-bZIP specific dimers, and also by C/S1 bZIP heterodimers. In terms of biological role, accepts electrons from ETF and reduces ubiquinone. May act downstream of IVD and D2HGDH in the degradation of phytol or chlorophyll during dark-induced senescence and sugar starvation. The polypeptide is Electron transfer flavoprotein-ubiquinone oxidoreductase, mitochondrial (ETFQO) (Arabidopsis thaliana (Mouse-ear cress)).